Reading from the N-terminus, the 85-residue chain is MNISKNEQRVLHVLAQGGRILYERAPNGRVTEVTCYTREGLILANCKLDVFNKLRRKRLVESKSSRPYQISEKGRRSVRAQLDNR.

The interval 62–85 (SKSSRPYQISEKGRRSVRAQLDNR) is disordered.

This sequence belongs to the UPF0386 family.

The protein is UPF0386 protein TM1040_0419 of Ruegeria sp. (strain TM1040) (Silicibacter sp.).